The following is a 276-amino-acid chain: Dermonecrotic toxin LspiSicTox-betaIE4ii (276 aa).

The active site involves H5. 2 residues coordinate Mg(2+): E25 and D27. Catalysis depends on H41, which acts as the Nucleophile. Disulfide bonds link C45–C51 and C47–C189. Position 85 (D85) interacts with Mg(2+).

This sequence belongs to the arthropod phospholipase D family. Class II subfamily. Requires Mg(2+) as cofactor. Expressed by the venom gland.

It is found in the secreted. It carries out the reaction an N-(acyl)-sphingosylphosphocholine = an N-(acyl)-sphingosyl-1,3-cyclic phosphate + choline. The catalysed reaction is an N-(acyl)-sphingosylphosphoethanolamine = an N-(acyl)-sphingosyl-1,3-cyclic phosphate + ethanolamine. The enzyme catalyses a 1-acyl-sn-glycero-3-phosphocholine = a 1-acyl-sn-glycero-2,3-cyclic phosphate + choline. It catalyses the reaction a 1-acyl-sn-glycero-3-phosphoethanolamine = a 1-acyl-sn-glycero-2,3-cyclic phosphate + ethanolamine. Functionally, dermonecrotic toxins cleave the phosphodiester linkage between the phosphate and headgroup of certain phospholipids (sphingolipid and lysolipid substrates), forming an alcohol (often choline) and a cyclic phosphate. This toxin acts on sphingomyelin (SM). It may also act on ceramide phosphoethanolamine (CPE), lysophosphatidylcholine (LPC) and lysophosphatidylethanolamine (LPE), but not on lysophosphatidylserine (LPS), and lysophosphatidylglycerol (LPG). It acts by transphosphatidylation, releasing exclusively cyclic phosphate products as second products. Induces dermonecrosis, hemolysis, increased vascular permeability, edema, inflammatory response, and platelet aggregation. This chain is Dermonecrotic toxin LspiSicTox-betaIE4ii, found in Loxosceles spinulosa (Recluse spider).